The primary structure comprises 310 residues: Putative S-adenosyl-L-methionine-dependent methyltransferase Franean1_4929 (310 aa).

The segment at 1 to 28 (MSRPSAPRGRTELRSIHERGHERGSAGV) is disordered. Basic and acidic residues predominate over residues 9–24 (GRTELRSIHERGHERG). Residues aspartate 136 and 165–166 (DL) each bind S-adenosyl-L-methionine.

The protein belongs to the UPF0677 family.

Functionally, exhibits S-adenosyl-L-methionine-dependent methyltransferase activity. This is Putative S-adenosyl-L-methionine-dependent methyltransferase Franean1_4929 from Parafrankia sp. (strain EAN1pec).